Consider the following 84-residue polypeptide: Small ribosomal subunit protein uS15 (84 aa).

This sequence belongs to the universal ribosomal protein uS15 family. In terms of assembly, part of the 30S ribosomal subunit. Forms a bridge to the 50S subunit in the 70S ribosome, contacting the 23S rRNA.

In terms of biological role, one of the primary rRNA binding proteins, it binds directly to 16S rRNA where it helps nucleate assembly of the platform of the 30S subunit by binding and bridging several RNA helices of the 16S rRNA. Functionally, forms an intersubunit bridge (bridge B4) with the 23S rRNA of the 50S subunit in the ribosome. The sequence is that of Small ribosomal subunit protein uS15 from Thermosipho melanesiensis (strain DSM 12029 / CIP 104789 / BI429).